The chain runs to 75 residues: UPF0352 protein VIBHAR_03027 (75 aa).

The protein belongs to the UPF0352 family.

The protein is UPF0352 protein VIBHAR_03027 of Vibrio campbellii (strain ATCC BAA-1116).